A 1386-amino-acid polypeptide reads, in one-letter code: Adhesin AWP3b (1386 aa).

An N-terminal signal peptide occupies residues 1–19 (MISFVTLLAILGLLSISWA). 3 cysteine pairs are disulfide-bonded: cysteine 115–cysteine 145, cysteine 144–cysteine 178, and cysteine 304–cysteine 341. Asparagine 117 carries N-linked (GlcNAc...) asparagine glycosylation. Residues asparagine 315, asparagine 345, asparagine 468, and asparagine 526 are each glycosylated (N-linked (GlcNAc...) asparagine). Residues 429 to 507 (TTDSPGHTIT…SSPTSDFSSV (79 aa)) are disordered. Disordered regions lie at residues 530–553 (IVDS…SSSM) and 612–690 (TTDS…FSSV). N-linked (GlcNAc...) asparagine glycosylation is found at asparagine 651 and asparagine 709. Disordered regions lie at residues 714–739 (VDSS…MSSS) and 795–873 (TTDS…FSSV). N-linked (GlcNAc...) asparagine glycans are attached at residues asparagine 834, asparagine 898, asparagine 1008, asparagine 1017, and asparagine 1096. The tract at residues 1000-1032 (TIQESELSNTSRTTMTSNSSVSISSTSSRSSFS) is disordered. Composition is skewed to polar residues over residues 1140–1150 (SHPVATNSGDK) and 1159–1177 (QVST…SSFD). Residues 1140–1186 (SHPVATNSGDKPTTPKRSEQVSTTMTSSGPTPDTSSFDTDGMSAYSR) form a disordered region. N-linked (GlcNAc...) asparagine glycosylation is present at asparagine 1197. The segment covering 1198–1218 (KSSTSQLGNNKQTFSNLQLES) has biased composition (polar residues). The tract at residues 1198 to 1227 (KSSTSQLGNNKQTFSNLQLESTRPHSENEV) is disordered. Asparagine 1229 carries N-linked (GlcNAc...) asparagine glycosylation. The segment covering 1241 to 1259 (STYGTNNVNPLSPTGSISI) has biased composition (polar residues). A disordered region spans residues 1241–1269 (STYGTNNVNPLSPTGSISIPLTEDGQGDN). Asparagine 1287 carries an N-linked (GlcNAc...) asparagine glycan.

It is found in the secreted. It localises to the cell wall. Its function is as follows. May play a role in cell adhesion. The sequence is that of Adhesin AWP3b from Candida glabrata (strain ATCC 2001 / BCRC 20586 / JCM 3761 / NBRC 0622 / NRRL Y-65 / CBS 138) (Yeast).